Reading from the N-terminus, the 87-residue chain is Insulin-related peptide 1 (87 aa).

An N-terminal signal peptide occupies residues 1 to 19 (MKSFMVFVLIFACFSCYYA). Residues 20–44 (QESTNFYCGRTLSRALAVLCYGAES) constitute a propeptide that is removed on maturation. Arginine amide is present on arginine 64. A propeptide spanning residues 68–87 (GPVDECCEKACSIQELMTYC) is cleaved from the precursor.

Belongs to the insulin family. As to expression, DAGWWIPQHGHHALAGVR-amide: Expressed in corpora cardiaca (CC), corpora allata (CA), antennal lobe (AL) and gnathal ganglion (GNG) (at protein level). Expression in CC and CA detected in most animals, in AL and GNG in few animals (at protein level).

It localises to the secreted. This chain is Insulin-related peptide 1, found in Agrotis ipsilon (Black cutworm moth).